The following is a 477-amino-acid chain: Bifunctional protein HldE (477 aa).

The segment at 1-318 (MKVTLPEFER…ENAVRGRADT (318 aa)) is ribokinase. Residue lysine 179 is modified to N6-acetyllysine. Residue 195–198 (NLSE) participates in ATP binding. Residue aspartate 264 is part of the active site. The segment at 344 to 477 (MTNGVFDILH…IKKIQQDKKG (134 aa)) is cytidylyltransferase.

The protein in the N-terminal section; belongs to the carbohydrate kinase PfkB family. This sequence in the C-terminal section; belongs to the cytidylyltransferase family. Homodimer.

It carries out the reaction D-glycero-beta-D-manno-heptose 7-phosphate + ATP = D-glycero-beta-D-manno-heptose 1,7-bisphosphate + ADP + H(+). It catalyses the reaction D-glycero-beta-D-manno-heptose 1-phosphate + ATP + H(+) = ADP-D-glycero-beta-D-manno-heptose + diphosphate. The protein operates within nucleotide-sugar biosynthesis; ADP-L-glycero-beta-D-manno-heptose biosynthesis; ADP-L-glycero-beta-D-manno-heptose from D-glycero-beta-D-manno-heptose 7-phosphate: step 1/4. It functions in the pathway nucleotide-sugar biosynthesis; ADP-L-glycero-beta-D-manno-heptose biosynthesis; ADP-L-glycero-beta-D-manno-heptose from D-glycero-beta-D-manno-heptose 7-phosphate: step 3/4. Its function is as follows. Catalyzes the phosphorylation of D-glycero-D-manno-heptose 7-phosphate at the C-1 position to selectively form D-glycero-beta-D-manno-heptose-1,7-bisphosphate. Functionally, catalyzes the ADP transfer from ATP to D-glycero-beta-D-manno-heptose 1-phosphate, yielding ADP-D-glycero-beta-D-manno-heptose. The polypeptide is Bifunctional protein HldE (Shigella flexneri serotype 5b (strain 8401)).